Here is a 396-residue protein sequence, read N- to C-terminus: Elongation factor Tu (396 aa).

One can recognise a tr-type G domain in the interval 10 to 206 (KPHCNIGTIG…NVDEYIPQPE (197 aa)). The G1 stretch occupies residues 19 to 26 (GHVDHGKT). 19-26 (GHVDHGKT) contributes to the GTP binding site. Mg(2+) is bound at residue T26. Positions 60-64 (GITIS) are G2. A G3 region spans residues 81 to 84 (DCPG). GTP contacts are provided by residues 81 to 85 (DCPGH) and 136 to 139 (NKCD). The interval 136-139 (NKCD) is G4. Residues 174-176 (SAL) are G5.

It belongs to the TRAFAC class translation factor GTPase superfamily. Classic translation factor GTPase family. EF-Tu/EF-1A subfamily. In terms of assembly, monomer.

Its subcellular location is the cytoplasm. It carries out the reaction GTP + H2O = GDP + phosphate + H(+). Functionally, GTP hydrolase that promotes the GTP-dependent binding of aminoacyl-tRNA to the A-site of ribosomes during protein biosynthesis. The protein is Elongation factor Tu of Bradyrhizobium sp. (strain BTAi1 / ATCC BAA-1182).